A 742-amino-acid polypeptide reads, in one-letter code: Zinc finger MYND domain-containing protein 15 (742 aa).

Residues 109–199 (LEDGEEGEEE…QKRKGQRSEA (91 aa)) are disordered. The segment covering 110–127 (EDGEEGEEEEEEDEEEEK) has biased composition (acidic residues). The segment covering 151–161 (SRESPQETNPP) has biased composition (polar residues). Residues 166 to 189 (EAAREAGGGKDGCREDRVENETRP) are compositionally biased toward basic and acidic residues. Zn(2+) contacts are provided by Cys313, Cys316, Cys328, Cys331, Cys337, Cys341, His355, and Cys359. Residues 313–359 (CHVCHRHSFEAKLTPCPQCSAVLYCGEACLRADWQRCPDDVSHRFWC) form an MYND-type zinc finger. 2 disordered regions span residues 565–590 (EVSV…GRRD) and 701–742 (QGSG…RRRK). Residues 708 to 724 (APGPPPPSPTPSAPPAP) are compositionally biased toward pro residues. Basic residues predominate over residues 725–742 (TRRRRGEKKPGRGARRRK).

Interacts with HDAC1, HDAC3, HDAC6 and, to a lesser extent, with HDAC7.

It localises to the nucleus. It is found in the cytoplasm. In terms of biological role, acts as a transcriptional repressor through interaction with histone deacetylases (HDACs). May be important for spermiogenesis. The sequence is that of Zinc finger MYND domain-containing protein 15 (ZMYND15) from Homo sapiens (Human).